A 261-amino-acid chain; its full sequence is Kynurenine formamidase (261 aa).

A Phosphoserine modification is found at serine 9. The short motif at 36–40 is the HGGXW element; that stretch reads HGGAW. Serine 110 serves as the catalytic Nucleophile. Active-site residues include aspartate 211 and histidine 243.

The protein belongs to the kynurenine formamidase family. As to quaternary structure, homodimer.

The enzyme catalyses N-formyl-L-kynurenine + H2O = L-kynurenine + formate + H(+). The protein operates within amino-acid degradation; L-tryptophan degradation via kynurenine pathway; L-kynurenine from L-tryptophan: step 2/2. In terms of biological role, catalyzes the hydrolysis of N-formyl-L-kynurenine to L-kynurenine, the second step in the kynurenine pathway of tryptophan degradation. Kynurenine may be further oxidized to nicotinic acid, NAD(H) and NADP(H). Required for elimination of toxic metabolites. The chain is Kynurenine formamidase from Saccharomyces cerevisiae (strain ATCC 204508 / S288c) (Baker's yeast).